A 226-amino-acid polypeptide reads, in one-letter code: V-type proton ATPase subunit E 1 (226 aa).

N-acetylalanine is present on alanine 2. Tyrosine 56 is subject to Phosphotyrosine.

Belongs to the V-ATPase E subunit family. V-ATPase is a heteromultimeric enzyme made up of two complexes: the ATP-hydrolytic V1 complex and the proton translocation V0 complex. The V1 complex consists of three catalytic AB heterodimers that form a heterohexamer, three peripheral stalks each consisting of EG heterodimers, one central rotor including subunits D and F, and the regulatory subunits C and H. The proton translocation complex V0 consists of the proton transport subunit a, a ring of proteolipid subunits c9c'', rotary subunit d, subunits e and f, and the accessory subunits ATP6AP1/Ac45 and ATP6AP2/PRR. Interacts with RABL2/RABL2A; binds preferentially to GTP-bound RABL2. Interacts with ALDOC. Interacts with RAB11B. As to expression, kidney; localizes to early distal nephron, encompassing thick ascending limbs and distal convoluted tubules (at protein level). Ubiquitous. High expression in the skin.

Its subcellular location is the apical cell membrane. It is found in the cytoplasmic vesicle. The protein resides in the secretory vesicle. It localises to the synaptic vesicle membrane. The protein localises to the clathrin-coated vesicle membrane. Its function is as follows. Subunit of the V1 complex of vacuolar(H+)-ATPase (V-ATPase), a multisubunit enzyme composed of a peripheral complex (V1) that hydrolyzes ATP and a membrane integral complex (V0) that translocates protons. V-ATPase is responsible for acidifying and maintaining the pH of intracellular compartments and in some cell types, is targeted to the plasma membrane, where it is responsible for acidifying the extracellular environment. The sequence is that of V-type proton ATPase subunit E 1 (ATP6V1E1) from Homo sapiens (Human).